Reading from the N-terminus, the 222-residue chain is Uridine kinase (222 aa).

13–20 (GGSGAGKT) contributes to the ATP binding site.

It belongs to the uridine kinase family.

Its subcellular location is the cytoplasm. It carries out the reaction uridine + ATP = UMP + ADP + H(+). The enzyme catalyses cytidine + ATP = CMP + ADP + H(+). It participates in pyrimidine metabolism; CTP biosynthesis via salvage pathway; CTP from cytidine: step 1/3. Its pathway is pyrimidine metabolism; UMP biosynthesis via salvage pathway; UMP from uridine: step 1/1. This Chlamydia pneumoniae (Chlamydophila pneumoniae) protein is Uridine kinase.